The chain runs to 349 residues: Fructose-1,6-bisphosphatase class 1 (349 aa).

Mg(2+)-binding residues include glutamate 91, aspartate 110, leucine 112, and aspartate 113. Substrate contacts are provided by residues 113 to 116 (DGSS) and asparagine 205. Mg(2+) is bound at residue glutamate 277.

Belongs to the FBPase class 1 family. Homotetramer. Mg(2+) serves as cofactor.

The protein localises to the cytoplasm. It carries out the reaction beta-D-fructose 1,6-bisphosphate + H2O = beta-D-fructose 6-phosphate + phosphate. Its pathway is carbohydrate biosynthesis; gluconeogenesis. The chain is Fructose-1,6-bisphosphatase class 1 from Sinorhizobium medicae (strain WSM419) (Ensifer medicae).